A 267-amino-acid polypeptide reads, in one-letter code: Small ribosomal subunit protein uS10m (267 aa).

The transit peptide at 1-10 (MLSRILGVRN) directs the protein to the mitochondrion.

Belongs to the universal ribosomal protein uS10 family. Part of the mitochondrial small ribosomal subunit.

Its subcellular location is the mitochondrion. Its function is as follows. Involved in mitochondrial genome encoded proteins translation. Involved in the binding of tRNA to the ribosomes. This is Small ribosomal subunit protein uS10m (RSM10) from Debaryomyces hansenii (strain ATCC 36239 / CBS 767 / BCRC 21394 / JCM 1990 / NBRC 0083 / IGC 2968) (Yeast).